A 429-amino-acid chain; its full sequence is 3-phosphoshikimate 1-carboxyvinyltransferase (429 aa).

Residues K23, S24, and R28 each coordinate 3-phosphoshikimate. Residue K23 participates in phosphoenolpyruvate binding. Positions 95 and 123 each coordinate phosphoenolpyruvate. Positions 168, 170, 316, and 343 each coordinate 3-phosphoshikimate. Residue Q170 participates in phosphoenolpyruvate binding. The active-site Proton acceptor is the D316. The phosphoenolpyruvate site is built by R347 and R389.

This sequence belongs to the EPSP synthase family. As to quaternary structure, monomer.

The protein resides in the cytoplasm. The catalysed reaction is 3-phosphoshikimate + phosphoenolpyruvate = 5-O-(1-carboxyvinyl)-3-phosphoshikimate + phosphate. Its pathway is metabolic intermediate biosynthesis; chorismate biosynthesis; chorismate from D-erythrose 4-phosphate and phosphoenolpyruvate: step 6/7. Functionally, catalyzes the transfer of the enolpyruvyl moiety of phosphoenolpyruvate (PEP) to the 5-hydroxyl of shikimate-3-phosphate (S3P) to produce enolpyruvyl shikimate-3-phosphate and inorganic phosphate. This chain is 3-phosphoshikimate 1-carboxyvinyltransferase, found in Bacillus cereus (strain B4264).